We begin with the raw amino-acid sequence, 476 residues long: ATP sulfurylase 2 (476 aa).

The transit peptide at 1-56 (MSLMIRSSYVSHITLFQPRNSKPSSFTNQISFLSSSNNNPFLNLVYKRNLTMQSVS) directs the protein to the chloroplast.

Belongs to the sulfate adenylyltransferase family. In terms of assembly, homotetramer. As to expression, mostly expressed in leaves or cotyledons.

It is found in the plastid. The protein resides in the chloroplast. Its subcellular location is the cytoplasm. It catalyses the reaction sulfate + ATP + H(+) = adenosine 5'-phosphosulfate + diphosphate. Its pathway is sulfur metabolism; hydrogen sulfide biosynthesis; sulfite from sulfate: step 1/3. The protein is ATP sulfurylase 2 (APS2) of Arabidopsis thaliana (Mouse-ear cress).